We begin with the raw amino-acid sequence, 1995 residues long: Myosin-14 (1995 aa).

A disordered region spans residues 1–46 (MAAVTMSVPGRKAPPRPGPVPEAAQPFLFTPRGPSAGGGPGSGTSP). Position 2 is an N-acetylalanine (Ala2). Residues 51 to 101 (TARRLVWVPSELHGFEAAALRDEGEEEAEVELAESGRRLRLPRDQIQRMNP) form the Myosin N-terminal SH3-like domain. Ser60 carries the phosphoserine modification. Positions 105-800 (SKAEDMAELT…VLAQLEEERD (696 aa)) constitute a Myosin motor domain. 198–205 (GESGAGKT) provides a ligand contact to ATP. An actin-binding region spans residues 678–700 (LSRLMATLSNTNPSFVRCIVPNH). The region spanning 803 to 832 (VTDIIVSFQAAARGYLARRAFQKRQQQQSA) is the IQ domain. Positions 862–1947 (LQVTRQDEVL…VTTLRNRLRR (1086 aa)) form a coiled coil. Thr1194 bears the Phosphothreonine mark. Disordered stretches follow at residues 1371 to 1415 (EEAA…RRAA), 1592 to 1623 (QHER…VERD), 1905 to 1942 (EAEE…TTLR), and 1958 to 1995 (RQVF…AHPQ). Residues 1930–1942 (SAESMNREVTTLR) are compositionally biased toward polar residues. 4 positions are modified to phosphoserine: Ser1969, Ser1980, Ser1983, and Ser1989. The span at 1981–1995 (GPSPEPEGSPPAHPQ) shows a compositional bias: pro residues.

This sequence belongs to the TRAFAC class myosin-kinesin ATPase superfamily. Myosin family. In terms of assembly, myosin is a hexameric protein that consists of 2 heavy chain subunits (MHC), 2 alkali light chain subunits (MLC) and 2 regulatory light chain subunits (MLC-2). High levels of expression are found in brain (highest in corpus callosum), heart, kidney, liver, lung, small intestine, colon and skeletal muscle. Expression is low in organs composed mainly of smooth muscle, such as aorta, uterus and urinary bladder. No detectable expression is found in thymus, spleen, placenta and lymphocytes.

Functionally, cellular myosin that appears to play a role in cytokinesis, cell shape, and specialized functions such as secretion and capping. The protein is Myosin-14 (MYH14) of Homo sapiens (Human).